A 393-amino-acid polypeptide reads, in one-letter code: L-rhamnonate dehydratase (393 aa).

Substrate is bound by residues H22 and R48. Mg(2+) contacts are provided by D214, E241, and E269. The active-site Proton acceptor is the H319. E339 serves as a coordination point for substrate.

This sequence belongs to the mandelate racemase/muconate lactonizing enzyme family. RhamD subfamily. In terms of assembly, homooctamer; tetramer of dimers. The cofactor is Mg(2+).

It carries out the reaction L-rhamnonate = 2-dehydro-3-deoxy-L-rhamnonate + H2O. Functionally, catalyzes the dehydration of L-rhamnonate to 2-keto-3-deoxy-L-rhamnonate (KDR). This chain is L-rhamnonate dehydratase, found in Azorhizobium caulinodans (strain ATCC 43989 / DSM 5975 / JCM 20966 / LMG 6465 / NBRC 14845 / NCIMB 13405 / ORS 571).